Reading from the N-terminus, the 550-residue chain is Acyl-CoA-dependent acyltransferase MAC2 (550 aa).

Belongs to the trichothecene O-acetyltransferase family.

It participates in secondary metabolite biosynthesis. Acyl-CoA-dependent acyltransferase; part of the gene cluster that mediates the biosynthesis of mannosylerythritol lipids (MELs), surface-active substances that enhance the availability of water-insoluble substrates. Depending on the number of acetyl groups, mannosylerythritol lipids can be differentiated into MEL A (fully acetylated), MEL B and MEL C (monoacetylated at R-6 and R-4, respectively), and the fully deacetylated MEL D. The first step in the pathway is the generation of mannosylerythritol by the glycosyltransferase EMT1 which catalyzes the transfer of GDP-mannose to the C-4 atom of meso-erythritol. This reaction has to be stereospecific, since only mannosyl-D-erythritol is generated. The produced disaccharide is subsequently acylated with fatty acids of various lengths by the acyltransferases MAC1 and MAC2 at positions C-2 and C-3, repectively. The existence of MEL derivatives which carry an acetyl group at C-2 implies that at least MAC1 also accepts acetyl-CoA as a donor. The final step of MEL biosynthesis is the acetylation of the fully acylated mannosylerythritol lipids catalyzed by the acetyl-CoA-dependent acetyltransferase MAT1. MAT1 displays a relaxed regioselectivity and is able to transfer acetylgroups to both positions C-4 and C-6 of the mannosyl moiety. The protein is Acyl-CoA-dependent acyltransferase MAC2 of Pseudozyma antarctica (strain T-34) (Yeast).